A 380-amino-acid polypeptide reads, in one-letter code: Cytochrome b (380 aa).

Transmembrane regions (helical) follow at residues 34–54 (FGSL…LLAM), 78–99 (WLIR…FLHI), 114–134 (WNTG…GYVL), and 179–199 (FFAL…IHLT). Heme b is bound by residues His84 and His98. Positions 183 and 197 each coordinate heme b. His202 lines the a ubiquinone pocket. 4 helical membrane-spanning segments follow: residues 227-247 (IKDI…ALFS), 289-309 (LGGV…PFLH), 321-341 (LSQT…WIGS), and 348-368 (FIII…ILFP).

It belongs to the cytochrome b family. In terms of assembly, the cytochrome bc1 complex contains 11 subunits: 3 respiratory subunits (MT-CYB, CYC1 and UQCRFS1), 2 core proteins (UQCRC1 and UQCRC2) and 6 low-molecular weight proteins (UQCRH/QCR6, UQCRB/QCR7, UQCRQ/QCR8, UQCR10/QCR9, UQCR11/QCR10 and a cleavage product of UQCRFS1). This cytochrome bc1 complex then forms a dimer. Requires heme b as cofactor.

It localises to the mitochondrion inner membrane. Functionally, component of the ubiquinol-cytochrome c reductase complex (complex III or cytochrome b-c1 complex) that is part of the mitochondrial respiratory chain. The b-c1 complex mediates electron transfer from ubiquinol to cytochrome c. Contributes to the generation of a proton gradient across the mitochondrial membrane that is then used for ATP synthesis. This chain is Cytochrome b (MT-CYB), found in Coturnix japonica (Japanese quail).